The primary structure comprises 461 residues: tRNA modification GTPase MnmE (461 aa).

The (6S)-5-formyl-5,6,7,8-tetrahydrofolate site is built by arginine 27, glutamate 89, and arginine 128. The 159-residue stretch at 224–382 (GLATAIVGRP…LENAIEKLFF (159 aa)) folds into the TrmE-type G domain. Position 234 (asparagine 234) interacts with K(+). Residues 234–239 (NVGKSS), 253–259 (TDIAGTT), and 278–281 (DTAG) contribute to the GTP site. Serine 238 contributes to the Mg(2+) binding site. K(+) contacts are provided by threonine 253, isoleucine 255, and threonine 258. Threonine 259 is a Mg(2+) binding site. Lysine 461 is a binding site for (6S)-5-formyl-5,6,7,8-tetrahydrofolate.

Belongs to the TRAFAC class TrmE-Era-EngA-EngB-Septin-like GTPase superfamily. TrmE GTPase family. As to quaternary structure, homodimer. Heterotetramer of two MnmE and two MnmG subunits. The cofactor is K(+).

It is found in the cytoplasm. Its function is as follows. Exhibits a very high intrinsic GTPase hydrolysis rate. Involved in the addition of a carboxymethylaminomethyl (cmnm) group at the wobble position (U34) of certain tRNAs, forming tRNA-cmnm(5)s(2)U34. The chain is tRNA modification GTPase MnmE from Lactobacillus gasseri (strain ATCC 33323 / DSM 20243 / BCRC 14619 / CIP 102991 / JCM 1131 / KCTC 3163 / NCIMB 11718 / NCTC 13722 / AM63).